The sequence spans 38 residues: MKVKASVKVLCRNCKIVRRKNVVRVICTNDPKHKQRQG.

Belongs to the bacterial ribosomal protein bL36 family.

This is Large ribosomal subunit protein bL36 from Buchnera aphidicola subsp. Schizaphis graminum (strain Sg).